Here is a 208-residue protein sequence, read N- to C-terminus: Thymidylate kinase (208 aa).

10–17 contributes to the ATP binding site; the sequence is GPEGSGKT.

The protein belongs to the thymidylate kinase family.

It catalyses the reaction dTMP + ATP = dTDP + ADP. Its function is as follows. Phosphorylation of dTMP to form dTDP in both de novo and salvage pathways of dTTP synthesis. This is Thymidylate kinase from Bacillus anthracis.